The primary structure comprises 313 residues: Ornithine carbamoyltransferase (313 aa).

Residues 57-60 (STRT), Gln84, Arg108, and 135-138 (HPTQ) each bind carbamoyl phosphate. L-ornithine-binding positions include Asn167, Asp231, and 235–236 (SM). Carbamoyl phosphate is bound by residues 272–273 (CL) and Arg300.

It belongs to the aspartate/ornithine carbamoyltransferase superfamily. OTCase family.

It localises to the cytoplasm. The catalysed reaction is carbamoyl phosphate + L-ornithine = L-citrulline + phosphate + H(+). The protein operates within amino-acid biosynthesis; L-arginine biosynthesis; L-arginine from L-ornithine and carbamoyl phosphate: step 1/3. Its function is as follows. Reversibly catalyzes the transfer of the carbamoyl group from carbamoyl phosphate (CP) to the N(epsilon) atom of ornithine (ORN) to produce L-citrulline. This Pseudothermotoga lettingae (strain ATCC BAA-301 / DSM 14385 / NBRC 107922 / TMO) (Thermotoga lettingae) protein is Ornithine carbamoyltransferase.